A 335-amino-acid polypeptide reads, in one-letter code: DNA-directed RNA polymerases I and III subunit RPAC1 (335 aa).

The residue at position 2 (serine 2) is an N-acetylserine. Serine 17 carries the post-translational modification Phosphoserine.

This sequence belongs to the archaeal Rpo3/eukaryotic RPB3 RNA polymerase subunit family. In terms of assembly, component of the RNA polymerase I (Pol I) complex consisting of 14 subunits: RPA135, RPA190, RPC40, RPA14, RPB5, RPO26, RPA43, RPB8, RPA12, RPB10, RPC19, RPC10, RPA49 and RPA34. The complex is composed of a horseshoe-shaped core containing ten subunits (RPA135, RPA190, RPB5, RPO26, RPB8, RPB10, RPC10, RPA12, RPC19 and RPC40) where RPA135 and RPA190 form the DNA-binding cleft. Outside of the core, RPA14 and RPA43 form the stalk that mediates interactions with transcription initiation factors and newly synthesized RNA. Component of the RNA polymerase III (Pol III) complex consisting of at least 17 subunits. Interacts with the RPC19/RPAC2 and RPC53/RPC4. Interacts with retrotransposons Ty integrase, targeting Ty1, Ty2 and Ty4 integration upstream of pol III-transcribed genes.

It localises to the nucleus. The protein resides in the nucleolus. DNA-dependent RNA polymerases catalyze the transcription of DNA into RNA using the four ribonucleoside triphosphates as substrates. Common component of RNA polymerases I (Pol I) and III (Pol III) which synthesize ribosomal RNA precursors and small RNAs, such as 5S rRNA and tRNAs, respectively. RPC40 is part of the polymerase core and may function as a clamp element that moves to open and close the cleft. Plays an important role in targeting retrotransposons Ty integration upstream of pol III-transcribed genes such as tRNA genes, allowing Ty1, Ty2 and Ty4 to proliferate and yet minimizing genetic damage. This chain is DNA-directed RNA polymerases I and III subunit RPAC1, found in Saccharomyces cerevisiae (strain ATCC 204508 / S288c) (Baker's yeast).